A 238-amino-acid polypeptide reads, in one-letter code: 3,4-dihydroxy-2-butanone 4-phosphate synthase (238 aa).

D-ribulose 5-phosphate contacts are provided by residues 26-27 (RE), aspartate 31, 166-170 (RVGQT), and glutamate 190. Glutamate 27 is a binding site for Mg(2+).

Belongs to the DHBP synthase family. Homodimer. Mg(2+) is required as a cofactor. It depends on Mn(2+) as a cofactor.

It carries out the reaction D-ribulose 5-phosphate = (2S)-2-hydroxy-3-oxobutyl phosphate + formate + H(+). It participates in cofactor biosynthesis; riboflavin biosynthesis; 2-hydroxy-3-oxobutyl phosphate from D-ribulose 5-phosphate: step 1/1. Its function is as follows. Catalyzes the conversion of D-ribulose 5-phosphate to formate and 3,4-dihydroxy-2-butanone 4-phosphate. The polypeptide is 3,4-dihydroxy-2-butanone 4-phosphate synthase (Archaeoglobus fulgidus (strain ATCC 49558 / DSM 4304 / JCM 9628 / NBRC 100126 / VC-16)).